Here is a 422-residue protein sequence, read N- to C-terminus: Dihydroorotase (422 aa).

The Zn(2+) site is built by H53 and H55. Substrate is bound by residues 55–57 (HFR) and N87. Zn(2+) is bound by residues E138, H172, H223, and D291. D291 is an active-site residue. Substrate is bound at residue H295.

The protein belongs to the metallo-dependent hydrolases superfamily. DHOase family. Class I DHOase subfamily. Zn(2+) serves as cofactor.

The enzyme catalyses (S)-dihydroorotate + H2O = N-carbamoyl-L-aspartate + H(+). It functions in the pathway pyrimidine metabolism; UMP biosynthesis via de novo pathway; (S)-dihydroorotate from bicarbonate: step 3/3. Catalyzes the reversible cyclization of carbamoyl aspartate to dihydroorotate. This is Dihydroorotase from Halobacterium salinarum (strain ATCC 700922 / JCM 11081 / NRC-1) (Halobacterium halobium).